Consider the following 277-residue polypeptide: MDSDSLHYSLDLAAANGLTLSSEQRAALQSSLLIVKRNYKFSRVLFWGKILGIKSDYFIAQGVEDDELKNRKSLYSLNCVDWHLLPPATESMIADVALAATGRFTGDPSHEYEHTEIRTEGEGDEATHEEVTVKVIEASRLAAIVSNIDKDVSVVPRGAFIKSPNGKVQTNRSFGGLHPTEAAKLRNYLHFREPVNLRNKSILEMSELNPALDFLDPLSEDILKGSWSLQLDRGGTVCVLRSLLWLGFTFFHVPQTPQHGYIYMGDGLMNLDLPFML.

This sequence belongs to the flagellar radial spoke RSP9 family. In terms of assembly, component of axonemal radial spoke complexes.

It is found in the cytoplasm. Its subcellular location is the cytoskeleton. The protein localises to the cilium axoneme. The protein resides in the flagellum axoneme. It localises to the cell projection. It is found in the kinocilium. Its function is as follows. Functions as part of axonemal radial spoke complexes that play an important part in the motility of sperm and cilia. Required for motility of olfactory and neural cilia and for the structural integrity of ciliary axonemes in both 9+0 and 9+2 motile cilia. Essential for both the radial spoke head assembly and the central pair microtubule stability in ependymal motile cilia. The protein is Radial spoke head protein 9 homolog (rsph9) of Danio rerio (Zebrafish).